Consider the following 448-residue polypeptide: B box and SPRY domain-containing protein (448 aa).

Positions 1-18 are enriched in low complexity; that stretch reads MSSDVSGTESGSESGPES. Positions 1–58 are disordered; the sequence is MSSDVSGTESGSESGPESVPEPVPEPGPEPESEPGPGPAPGPGPGPAPGPGPGLGREP. A compositionally biased stretch (pro residues) spans 19–51; sequence VPEPVPEPGPEPESEPGPGPAPGPGPGPAPGPG. The segment at 63–111 adopts a B box-type zinc-finger fold; that stretch reads QPCQLCPEHGKPLSWFCLSERRPVCATCAGFGGRCHRHRIRRAEEHAEE. One can recognise a B30.2/SPRY domain in the interval 257-448; that stretch reads SPLLTQLWAT…VADQVISIVC (192 aa).

As to quaternary structure, interacts with TRPV5 and TRPV6. Interacts with YWHAZ/14-3-3 protein zeta. Predominantly expressed in testis. Expressed in brain at low levels.

It localises to the cytoplasm. It is found in the membrane. May regulate epithelial calcium transport by inhibiting TRPV5 activity. In Rattus norvegicus (Rat), this protein is B box and SPRY domain-containing protein (Bspry).